An 83-amino-acid chain; its full sequence is Phosphoribosylformylglycinamidine synthase subunit PurS (83 aa).

It belongs to the PurS family. As to quaternary structure, homodimer. Part of the FGAM synthase complex composed of 1 PurL, 1 PurQ and 2 PurS subunits.

It localises to the cytoplasm. The catalysed reaction is N(2)-formyl-N(1)-(5-phospho-beta-D-ribosyl)glycinamide + L-glutamine + ATP + H2O = 2-formamido-N(1)-(5-O-phospho-beta-D-ribosyl)acetamidine + L-glutamate + ADP + phosphate + H(+). The protein operates within purine metabolism; IMP biosynthesis via de novo pathway; 5-amino-1-(5-phospho-D-ribosyl)imidazole from N(2)-formyl-N(1)-(5-phospho-D-ribosyl)glycinamide: step 1/2. Functionally, part of the phosphoribosylformylglycinamidine synthase complex involved in the purines biosynthetic pathway. Catalyzes the ATP-dependent conversion of formylglycinamide ribonucleotide (FGAR) and glutamine to yield formylglycinamidine ribonucleotide (FGAM) and glutamate. The FGAM synthase complex is composed of three subunits. PurQ produces an ammonia molecule by converting glutamine to glutamate. PurL transfers the ammonia molecule to FGAR to form FGAM in an ATP-dependent manner. PurS interacts with PurQ and PurL and is thought to assist in the transfer of the ammonia molecule from PurQ to PurL. This chain is Phosphoribosylformylglycinamidine synthase subunit PurS, found in Methanocaldococcus jannaschii (strain ATCC 43067 / DSM 2661 / JAL-1 / JCM 10045 / NBRC 100440) (Methanococcus jannaschii).